Consider the following 290-residue polypeptide: Nucleoid occlusion protein (290 aa).

The H-T-H motif DNA-binding region spans glutamate 153 to leucine 172.

Belongs to the ParB family.

Its subcellular location is the cytoplasm. The protein resides in the nucleoid. Effects nucleoid occlusion by binding relatively nonspecifically to DNA and preventing the assembly of the division machinery in the vicinity of the nucleoid, especially under conditions that disturb the cell cycle. It helps to coordinate cell division and chromosome segregation by preventing the formation of the Z ring through the nucleoid, which would cause chromosome breakage. In Bacillus cereus (strain AH187), this protein is Nucleoid occlusion protein.